We begin with the raw amino-acid sequence, 315 residues long: Small ribosomal subunit protein mS45 (315 aa).

A mitochondrion-targeting transit peptide spans 1–66; the sequence is MRNSVEFSQL…SKYVACNSRS (66 aa).

Belongs to the mitochondrion-specific ribosomal protein mS45 family. As to quaternary structure, component of the mitochondrial small ribosomal subunit (mt-SSU). Mature yeast 74S mitochondrial ribosomes consist of a small (37S) and a large (54S) subunit. The 37S small subunit contains a 15S ribosomal RNA (15S mt-rRNA) and at least 32 different proteins. The 54S large subunit contains a 21S rRNA (21S mt-rRNA) and at least 45 different proteins.

It is found in the mitochondrion. Functionally, component of the mitochondrial ribosome (mitoribosome), a dedicated translation machinery responsible for the synthesis of mitochondrial genome-encoded proteins, including at least some of the essential transmembrane subunits of the mitochondrial respiratory chain. The mitoribosomes are attached to the mitochondrial inner membrane and translation products are cotranslationally integrated into the membrane. Required for mitochondrial protein synthesis. Has a role in mitochondrial integrity and cell respiration. The chain is Small ribosomal subunit protein mS45 (bot1) from Schizosaccharomyces pombe (strain 972 / ATCC 24843) (Fission yeast).